The primary structure comprises 158 residues: 2-C-methyl-D-erythritol 2,4-cyclodiphosphate synthase (158 aa).

2 residues coordinate a divalent metal cation: D9 and H11. 4-CDP-2-C-methyl-D-erythritol 2-phosphate-binding positions include 9–11 (DVH) and 35–36 (HS). Position 43 (H43) interacts with a divalent metal cation. Residues 57 to 59 (DIG), 62 to 66 (FPDTD), 133 to 136 (TTTE), F140, and R143 each bind 4-CDP-2-C-methyl-D-erythritol 2-phosphate.

It belongs to the IspF family. In terms of assembly, homotrimer. A divalent metal cation serves as cofactor.

The catalysed reaction is 4-CDP-2-C-methyl-D-erythritol 2-phosphate = 2-C-methyl-D-erythritol 2,4-cyclic diphosphate + CMP. Its pathway is isoprenoid biosynthesis; isopentenyl diphosphate biosynthesis via DXP pathway; isopentenyl diphosphate from 1-deoxy-D-xylulose 5-phosphate: step 4/6. Involved in the biosynthesis of isopentenyl diphosphate (IPP) and dimethylallyl diphosphate (DMAPP), two major building blocks of isoprenoid compounds. Catalyzes the conversion of 4-diphosphocytidyl-2-C-methyl-D-erythritol 2-phosphate (CDP-ME2P) to 2-C-methyl-D-erythritol 2,4-cyclodiphosphate (ME-CPP) with a corresponding release of cytidine 5-monophosphate (CMP). This Actinobacillus pleuropneumoniae serotype 5b (strain L20) protein is 2-C-methyl-D-erythritol 2,4-cyclodiphosphate synthase.